The chain runs to 448 residues: Signal recognition particle protein (448 aa).

GTP is bound by residues 101–108 (GLQGSGKT), 182–186 (DSAGR), and 240–243 (SKFD).

The protein belongs to the GTP-binding SRP family. SRP54 subfamily. Part of the signal recognition particle protein translocation system, which is composed of SRP and FtsY. SRP is a ribonucleoprotein composed of Ffh and a 4.5S RNA molecule.

The protein localises to the cytoplasm. The enzyme catalyses GTP + H2O = GDP + phosphate + H(+). Functionally, involved in targeting and insertion of nascent membrane proteins into the cytoplasmic membrane. Binds to the hydrophobic signal sequence of the ribosome-nascent chain (RNC) as it emerges from the ribosomes. The SRP-RNC complex is then targeted to the cytoplasmic membrane where it interacts with the SRP receptor FtsY. Interaction with FtsY leads to the transfer of the RNC complex to the Sec translocase for insertion into the membrane, the hydrolysis of GTP by both Ffh and FtsY, and the dissociation of the SRP-FtsY complex into the individual components. In Helicobacter pylori (strain ATCC 700392 / 26695) (Campylobacter pylori), this protein is Signal recognition particle protein.